Here is a 482-residue protein sequence, read N- to C-terminus: Mannan endo-1,4-beta-mannosidase (482 aa).

The signal sequence occupies residues 1–21 (MARTLRYLLCGILALAAGSNA). One can recognise a CBM6 domain in the interval 42-160 (TTYEAEDAIL…WYLVDSITLT (119 aa)). N171 and N300 each carry an N-linked (GlcNAc...) asparagine glycan. The region spanning 181–474 (ASARALYDYL…YTSDYVLTLD (294 aa)) is the GH26 domain. E332 acts as the Proton donor in catalysis. Catalysis depends on E422, which acts as the Nucleophile.

It belongs to the glycosyl hydrolase 26 family.

Its subcellular location is the secreted. With respect to regulation, the activity is completely impaired by Ag(+), partially inhibited by Zn(2+), and enhanced by Co(2+), Ni(2+) and Cu(2+) by 22.6, 14.5 and 20.8 %, respectively. Ca(2+), Na(+), Mg(2+), Mn(2+), urea and EDTA do not significantly affect the mannanase activity. Its function is as follows. Mannan endo-1,4-beta-mannosidase that exhibits high activity against konjac glucomannan and carob galactomannan, as well as a lower activity toward beta-mannan. Shows no activity against barley beta-glucan, birchwood xylan, and low viscosity carboxymethyl cellulose (CMC). Has the ability to hydrolyze manno-oligosaccharides such as M4 which is degraded slightly to M3 and M1, M5 which is mainly degraded to M4 and M1, and M6 which is mostly hydrolyzed to M4 and M2. Shows no activity toward M2 and M3 manno-oligosaccharides. This is Mannan endo-1,4-beta-mannosidase from Thermothelomyces thermophilus (strain ATCC 42464 / BCRC 31852 / DSM 1799) (Sporotrichum thermophile).